Here is a 154-residue protein sequence, read N- to C-terminus: UPF0756 membrane protein CKR_1028 (154 aa).

Transmembrane regions (helical) follow at residues isoleucine 5–alanine 25, asparagine 48–glycine 68, tryptophan 82–methionine 102, and isoleucine 113–valine 133.

This sequence belongs to the UPF0756 family.

It localises to the cell membrane. The polypeptide is UPF0756 membrane protein CKR_1028 (Clostridium kluyveri (strain NBRC 12016)).